The chain runs to 36 residues: MEVNILGVIAVALFILIPTSFLLILYVKTSAENKDN.

A helical transmembrane segment spans residues 5–25 (ILGVIAVALFILIPTSFLLIL).

Belongs to the PsbM family. PSII is composed of 1 copy each of membrane proteins PsbA, PsbB, PsbC, PsbD, PsbE, PsbF, PsbH, PsbI, PsbJ, PsbK, PsbL, PsbM, PsbT, PsbY, PsbZ, Psb30/Ycf12, at least 3 peripheral proteins of the oxygen-evolving complex and a large number of cofactors. It forms dimeric complexes.

The protein localises to the plastid. The protein resides in the chloroplast thylakoid membrane. In terms of biological role, one of the components of the core complex of photosystem II (PSII). PSII is a light-driven water:plastoquinone oxidoreductase that uses light energy to abstract electrons from H(2)O, generating O(2) and a proton gradient subsequently used for ATP formation. It consists of a core antenna complex that captures photons, and an electron transfer chain that converts photonic excitation into a charge separation. This subunit is found at the monomer-monomer interface. The protein is Photosystem II reaction center protein M of Bigelowiella natans (Pedinomonas minutissima).